The sequence spans 339 residues: tRNA-splicing endonuclease (339 aa).

Active-site residues include Y274, H285, and K316.

It belongs to the tRNA-intron endonuclease family. Archaeal long subfamily. Homodimer. Ca(2+) is required as a cofactor. The cofactor is Mg(2+). Post-translationally, the N-terminus is blocked.

It catalyses the reaction pretRNA = a 3'-half-tRNA molecule with a 5'-OH end + a 5'-half-tRNA molecule with a 2',3'-cyclic phosphate end + an intron with a 2',3'-cyclic phosphate and a 5'-hydroxyl terminus.. Functionally, endonuclease that removes tRNA introns. Cleaves pre-tRNA at the 5'- and 3'-splice sites to release the intron. The products are an intron and two tRNA half-molecules bearing 2',3' cyclic phosphate and 5'-OH termini. Recognizes a pseudosymmetric substrate in which 2 bulged loops of 3 bases are separated by a stem of 4 bp. The polypeptide is tRNA-splicing endonuclease (Haloferax volcanii (strain ATCC 29605 / DSM 3757 / JCM 8879 / NBRC 14742 / NCIMB 2012 / VKM B-1768 / DS2) (Halobacterium volcanii)).